Consider the following 110-residue polypeptide: U1-lycotoxin-Ls1cc (110 aa).

Positions 1 to 20 are cleaved as a signal peptide; it reads MKFVLLFGVLLVTLFSYSSA. Residues 21 to 44 constitute a propeptide that is removed on maturation; the sequence is EMLDDFDQADEDELLSLIEKEEAR. 4 cysteine pairs are disulfide-bonded: cysteine 47–cysteine 62, cysteine 54–cysteine 71, cysteine 61–cysteine 89, and cysteine 73–cysteine 87.

It belongs to the neurotoxin 19 (CSTX) family. 03 subfamily. As to expression, expressed by the venom gland.

It localises to the secreted. The polypeptide is U1-lycotoxin-Ls1cc (Lycosa singoriensis (Wolf spider)).